The chain runs to 342 residues: tRNA N6-adenosine threonylcarbamoyltransferase (342 aa).

Residues His-112 and His-116 each contribute to the Fe cation site. Substrate is bound by residues 134 to 138 (IVSGG), Asp-167, Gly-180, and Asn-278. Fe cation is bound at residue Asp-306.

It belongs to the KAE1 / TsaD family. Fe(2+) serves as cofactor.

The protein localises to the cytoplasm. The catalysed reaction is L-threonylcarbamoyladenylate + adenosine(37) in tRNA = N(6)-L-threonylcarbamoyladenosine(37) in tRNA + AMP + H(+). Required for the formation of a threonylcarbamoyl group on adenosine at position 37 (t(6)A37) in tRNAs that read codons beginning with adenine. Is involved in the transfer of the threonylcarbamoyl moiety of threonylcarbamoyl-AMP (TC-AMP) to the N6 group of A37, together with TsaE and TsaB. TsaD likely plays a direct catalytic role in this reaction. This is tRNA N6-adenosine threonylcarbamoyltransferase from Anaplasma phagocytophilum (strain HZ).